The chain runs to 430 residues: Histidine--tRNA ligase, chloroplastic (430 aa).

Belongs to the class-II aminoacyl-tRNA synthetase family.

It is found in the plastid. The protein localises to the chloroplast. It carries out the reaction tRNA(His) + L-histidine + ATP = L-histidyl-tRNA(His) + AMP + diphosphate + H(+). The sequence is that of Histidine--tRNA ligase, chloroplastic (hisS) from Porphyra purpurea (Red seaweed).